The chain runs to 295 residues: Ribosomal protein L11 methyltransferase (295 aa).

Residues T150, G171, D193, and N232 each coordinate S-adenosyl-L-methionine.

It belongs to the methyltransferase superfamily. PrmA family.

It is found in the cytoplasm. It catalyses the reaction L-lysyl-[protein] + 3 S-adenosyl-L-methionine = N(6),N(6),N(6)-trimethyl-L-lysyl-[protein] + 3 S-adenosyl-L-homocysteine + 3 H(+). Methylates ribosomal protein L11. This is Ribosomal protein L11 methyltransferase from Neisseria meningitidis serogroup B (strain ATCC BAA-335 / MC58).